A 146-amino-acid chain; its full sequence is D-aminoacyl-tRNA deacylase (146 aa).

The short motif at 137 to 138 (GP) is the Gly-cisPro motif, important for rejection of L-amino acids element.

The protein belongs to the DTD family. As to quaternary structure, homodimer.

It is found in the cytoplasm. The enzyme catalyses glycyl-tRNA(Ala) + H2O = tRNA(Ala) + glycine + H(+). The catalysed reaction is a D-aminoacyl-tRNA + H2O = a tRNA + a D-alpha-amino acid + H(+). Its function is as follows. An aminoacyl-tRNA editing enzyme that deacylates mischarged D-aminoacyl-tRNAs. Also deacylates mischarged glycyl-tRNA(Ala), protecting cells against glycine mischarging by AlaRS. Acts via tRNA-based rather than protein-based catalysis; rejects L-amino acids rather than detecting D-amino acids in the active site. By recycling D-aminoacyl-tRNA to D-amino acids and free tRNA molecules, this enzyme counteracts the toxicity associated with the formation of D-aminoacyl-tRNA entities in vivo and helps enforce protein L-homochirality. This is D-aminoacyl-tRNA deacylase from Halalkalibacterium halodurans (strain ATCC BAA-125 / DSM 18197 / FERM 7344 / JCM 9153 / C-125) (Bacillus halodurans).